A 194-amino-acid polypeptide reads, in one-letter code: Protein LURP-one-related 10 (194 aa).

The protein belongs to the LOR family.

Its function is as follows. Might be related to the phospholipid scramblase and tubby-like superfamily of membrane tethered transcription factors. In Arabidopsis thaliana (Mouse-ear cress), this protein is Protein LURP-one-related 10.